Consider the following 157-residue polypeptide: 2-C-methyl-D-erythritol 2,4-cyclodiphosphate synthase (157 aa).

Residues aspartate 8 and histidine 10 each coordinate a divalent metal cation. 4-CDP-2-C-methyl-D-erythritol 2-phosphate is bound by residues 8–10 and 34–35; these read DIH and HS. Histidine 42 contacts a divalent metal cation. 4-CDP-2-C-methyl-D-erythritol 2-phosphate-binding positions include 56-58, 61-65, 132-135, and arginine 142; these read DIG, FPDTD, and TTNE.

It belongs to the IspF family. Homotrimer. A divalent metal cation is required as a cofactor.

The enzyme catalyses 4-CDP-2-C-methyl-D-erythritol 2-phosphate = 2-C-methyl-D-erythritol 2,4-cyclic diphosphate + CMP. It participates in isoprenoid biosynthesis; isopentenyl diphosphate biosynthesis via DXP pathway; isopentenyl diphosphate from 1-deoxy-D-xylulose 5-phosphate: step 4/6. In terms of biological role, involved in the biosynthesis of isopentenyl diphosphate (IPP) and dimethylallyl diphosphate (DMAPP), two major building blocks of isoprenoid compounds. Catalyzes the conversion of 4-diphosphocytidyl-2-C-methyl-D-erythritol 2-phosphate (CDP-ME2P) to 2-C-methyl-D-erythritol 2,4-cyclodiphosphate (ME-CPP) with a corresponding release of cytidine 5-monophosphate (CMP). The polypeptide is 2-C-methyl-D-erythritol 2,4-cyclodiphosphate synthase (Chloroherpeton thalassium (strain ATCC 35110 / GB-78)).